The sequence spans 431 residues: O-Mevalon transferase macI (431 aa).

Residue asparagine 176 is glycosylated (N-linked (GlcNAc...) asparagine). 4 consecutive transmembrane segments (helical) span residues 198–218 (IYALIVCGFAITIYSHFAILM), 301–321 (LLMMSFVISGLIHACGTYQVT), 336–356 (YFALQGMAIIAEDFGCWVLGI), and 404–424 (LFAALELVRVSAVAVPGNFVA).

This sequence belongs to the wax synthase family.

The protein resides in the membrane. It participates in secondary metabolite biosynthesis; terpenoid biosynthesis. Functionally, O-Mevalon transferase; part of the gene cluster that mediates the biosynthesis of macrophorins, isoprenoid epoxycyclohexenones containing cyclized drimane moieties. The first step of the pathway is the synthesis of 6-methylsalicylic acid (6-MSA) by the polyketide synthase macA. 6-MSA is then converted to m-cresol by the decarboxylase macB. The cytochrome P450 monooxygenase macC then catalyzes the oxidation of m-cresol to toluquinol. Epoxidation of toluquinol is then performed by the short chain dehydrogenase macD, with the help of macE, and a further prenylation by macG leads to 7-deacetoxyyanuthone A. The next step is the hydroxylation of C-22 of 7-deacetoxyyanuthone A by the cytochrome P450 monooxygenase macH to yield 22-deacetylyanuthone A. O-Mevalon transferase macI then attaches mevalon to the hydroxyl group of 22-deacetylyanuthone A to produce yanuthone E. The terpene cyclase macJ catalyzes the cyclization of 22-deacetylyanuthone A to macrophorin A. MacJ is also able to catalyze cyclization of yanuthone E and 7-deacetoxyyanuthone A to their corresponding macrophorins. The macJ products can be further modified by macH and macJ, as well as by the FAD-dependent monooxygenase macF, to produce additional macrophorins, including 4'-oxomacrophorin A, 4'-oxomacrophorin D and 4'-oxomacrophorin E. The chain is O-Mevalon transferase macI from Penicillium terrestre.